The chain runs to 75 residues: Exodeoxyribonuclease 7 small subunit (75 aa).

The protein belongs to the XseB family. Heterooligomer composed of large and small subunits.

It is found in the cytoplasm. It catalyses the reaction Exonucleolytic cleavage in either 5'- to 3'- or 3'- to 5'-direction to yield nucleoside 5'-phosphates.. Its function is as follows. Bidirectionally degrades single-stranded DNA into large acid-insoluble oligonucleotides, which are then degraded further into small acid-soluble oligonucleotides. The protein is Exodeoxyribonuclease 7 small subunit of Elusimicrobium minutum (strain Pei191).